The primary structure comprises 320 residues: Nicotianamine synthase 1 (320 aa).

It belongs to the nicotianamine synthase (NAS)-like family. As to expression, in shoots and roots.

It carries out the reaction 3 S-adenosyl-L-methionine = nicotianamine + 3 S-methyl-5'-thioadenosine + 3 H(+). In terms of biological role, synthesizes nicotianamine, a polyamine which serves as a sensor for the physiological iron status within the plant, and/or might be involved in the transport of iron. The sequence is that of Nicotianamine synthase 1 (NAS1) from Arabidopsis thaliana (Mouse-ear cress).